A 259-amino-acid chain; its full sequence is Haloacid dehalogenase-like hydrolase domain-containing protein 2 (259 aa).

The Mg(2+) site is built by D13 and N15. Substrate contacts are provided by residues D13–N15 and T46–N47. Positions N47 to I72 form a coiled coil. K50 carries the post-translational modification N6-succinyllysine. Substrate is bound at residue K179. Mg(2+) is bound at residue D204.

It belongs to the HAD-like hydrolase superfamily. Requires Mg(2+) as cofactor.

This is Haloacid dehalogenase-like hydrolase domain-containing protein 2 (Hdhd2) from Mus musculus (Mouse).